The sequence spans 340 residues: Polyporopepsin (340 aa).

The Peptidase A1 domain maps to 14–330 (YVVNVGVGSP…DTTNKRLGLA (317 aa)). The active site involves D32. N192 carries N-linked (GlcNAc...) asparagine glycosylation. The active site involves D212. The N-linked (GlcNAc...) asparagine glycan is linked to N238.

Belongs to the peptidase A1 family.

It catalyses the reaction Milk clotting activity, broad specificity, but fails to cleave 15-Leu-|-Tyr-16 or 16-Tyr-|-Leu-17 of insulin B chain.. The polypeptide is Polyporopepsin (Irpex lacteus (Milk-white toothed polypore)).